Here is a 124-residue protein sequence, read N- to C-terminus: MALTKDDILNAIAEMPVMELVELIEAAEEKFGVDASAAVAVAAPAAGGEAAAEEKTEFDVVLKAAGANKVSAIKAVRGATGLGLKEAKAMVESAPVAVKEGVSKDEAEELKKQLEEAGAEVEVK.

This sequence belongs to the bacterial ribosomal protein bL12 family. Homodimer. Part of the ribosomal stalk of the 50S ribosomal subunit. Forms a multimeric L10(L12)X complex, where L10 forms an elongated spine to which 2 to 4 L12 dimers bind in a sequential fashion. Binds GTP-bound translation factors.

Forms part of the ribosomal stalk which helps the ribosome interact with GTP-bound translation factors. Is thus essential for accurate translation. In Idiomarina loihiensis (strain ATCC BAA-735 / DSM 15497 / L2-TR), this protein is Large ribosomal subunit protein bL12.